The following is a 160-amino-acid chain: Conopressin/conophysin, isoform 2 (160 aa).

A signal peptide spans Met-1–Gly-30. Residues Cys-31 and Cys-36 are joined by a disulfide bond. Gly-39 carries the glycine amide modification. A propeptide spanning residues Gly-40–Leu-47 is cleaved from the precursor. 7 cysteine pairs are disulfide-bonded: Cys-53–Cys-97, Cys-56–Cys-70, Cys-64–Cys-87, Cys-71–Cys-77, Cys-104–Cys-118, Cys-112–Cys-130, and Cys-119–Cys-124.

Belongs to the vasopressin/oxytocin family. In terms of tissue distribution, expressed by the venom gland.

Its subcellular location is the secreted. Functionally, targets vasopressin-oxytocin related receptors. This is Conopressin/conophysin, isoform 2 from Conus monile (Necklace cone).